We begin with the raw amino-acid sequence, 1029 residues long: Exportin-T (1029 aa).

Belongs to the exportin family.

The protein localises to the nucleus. It is found in the cytoplasm. Functionally, tRNA nucleus export receptor which facilitates tRNA translocation across the nuclear pore complex. Involved in pre-tRNA splicing, probably by affecting the interaction of pre-tRNA with splicing endonuclease. In Aspergillus clavatus (strain ATCC 1007 / CBS 513.65 / DSM 816 / NCTC 3887 / NRRL 1 / QM 1276 / 107), this protein is Exportin-T (los1).